Reading from the N-terminus, the 329-residue chain is Acetoacetyl CoA synthase NphT7 (329 aa).

Residues Cys115, His256, and Asn286 contribute to the active site.

This sequence belongs to the thiolase-like superfamily. FabH family. In terms of assembly, homodimer.

The protein localises to the cytoplasm. The catalysed reaction is malonyl-CoA + acetyl-CoA + H(+) = acetoacetyl-CoA + CO2 + CoA. It functions in the pathway metabolic intermediate biosynthesis; (R)-mevalonate biosynthesis. Its function is as follows. Catalyzes the condensation of acetyl-CoA and malonyl-CoA to form acetoacetyl-CoA and CoA. Does not accept malonyl-[acyl-carrier-protein] as a substrate. Can also convert malonyl-CoA into acetyl-CoA via decarboxylation of malonyl-CoA. This chain is Acetoacetyl CoA synthase NphT7 (nphT7), found in Streptomyces sp. (strain CL190).